The sequence spans 267 residues: Type III pantothenate kinase (267 aa).

6-13 provides a ligand contact to ATP; it reads DVRNTHTT. Position 109-112 (109-112) interacts with substrate; that stretch reads GADR. The Proton acceptor role is filled by D111. D131 contacts K(+). Residue S134 coordinates ATP. T186 serves as a coordination point for substrate.

This sequence belongs to the type III pantothenate kinase family. In terms of assembly, homodimer. NH4(+) is required as a cofactor. K(+) serves as cofactor.

It localises to the cytoplasm. It catalyses the reaction (R)-pantothenate + ATP = (R)-4'-phosphopantothenate + ADP + H(+). The protein operates within cofactor biosynthesis; coenzyme A biosynthesis; CoA from (R)-pantothenate: step 1/5. Functionally, catalyzes the phosphorylation of pantothenate (Pan), the first step in CoA biosynthesis. This is Type III pantothenate kinase from Mycobacterium sp. (strain JLS).